The sequence spans 141 residues: Large ribosomal subunit protein uL11 (141 aa).

The protein belongs to the universal ribosomal protein uL11 family. As to quaternary structure, part of the ribosomal stalk of the 50S ribosomal subunit. Interacts with L10 and the large rRNA to form the base of the stalk. L10 forms an elongated spine to which L12 dimers bind in a sequential fashion forming a multimeric L10(L12)X complex. One or more lysine residues are methylated.

Its function is as follows. Forms part of the ribosomal stalk which helps the ribosome interact with GTP-bound translation factors. The protein is Large ribosomal subunit protein uL11 of Synechococcus sp. (strain CC9902).